Reading from the N-terminus, the 414-residue chain is Putative competence-damage inducible protein (414 aa).

This sequence belongs to the CinA family.

The polypeptide is Putative competence-damage inducible protein (Listeria monocytogenes serovar 1/2a (strain ATCC BAA-679 / EGD-e)).